The primary structure comprises 68 residues: UPF0352 protein CPS_2611 (68 aa).

Belongs to the UPF0352 family.

This chain is UPF0352 protein CPS_2611, found in Colwellia psychrerythraea (strain 34H / ATCC BAA-681) (Vibrio psychroerythus).